The following is a 159-amino-acid chain: UPF0587 protein v1g245604 (159 aa).

4 residues coordinate Zn(2+): Cys33, Cys36, Cys67, and Cys70.

Belongs to the UPF0587 family.

The polypeptide is UPF0587 protein v1g245604 (Nematostella vectensis (Starlet sea anemone)).